The primary structure comprises 888 residues: DNA mismatch repair protein MutS (888 aa).

Residue 641 to 648 participates in ATP binding; the sequence is GPNMAGKS.

The protein belongs to the DNA mismatch repair MutS family.

In terms of biological role, this protein is involved in the repair of mismatches in DNA. It is possible that it carries out the mismatch recognition step. This protein has a weak ATPase activity. This chain is DNA mismatch repair protein MutS, found in Rickettsia bellii (strain RML369-C).